The chain runs to 206 residues: MLPPAIHLSLIPLLCILMRNCLAFKNDATEILYSHVVKPVPAHPSSNSTLNQARNGGRHFSSTGLDRNSRVQVGCRELRSTKYISDGQCTSISPLKELVCAGECLPLPVLPNWIGGGYGTKYWSRRSSQEWRCVNDKTRTQRIQLQCQDGSTRTYKITVVTACKCKRYTRQHNESSHNFESVSPAKPAQHHRERKRASKSSKHSLS.

The N-terminal stretch at 1–23 (MLPPAIHLSLIPLLCILMRNCLA) is a signal peptide. The interval 42 to 62 (AHPSSNSTLNQARNGGRHFSS) is disordered. Over residues 44–62 (PSSNSTLNQARNGGRHFSS) the composition is skewed to polar residues. An N-linked (GlcNAc...) asparagine glycan is attached at Asn-47. Intrachain disulfides connect Cys-75/Cys-133, Cys-89/Cys-147, Cys-100/Cys-163, and Cys-104/Cys-165. A CTCK domain is found at 75–170 (CRELRSTKYI…TACKCKRYTR (96 aa)). An N-linked (GlcNAc...) asparagine glycan is attached at Asn-173. Residues 176-206 (SHNFESVSPAKPAQHHRERKRASKSSKHSLS) form a disordered region. The segment covering 188–206 (AQHHRERKRASKSSKHSLS) has biased composition (basic residues).

The protein belongs to the sclerostin family. Interacts with BMP2, BMP4, BMP6 and BMP7 with high affinity. As to expression, highly expressed in kidney at renal collecting ducts level and weakly in brain.

It is found in the secreted. Its function is as follows. May be involved in the onset of endometrial receptivity for implantation/sensitization for the decidual cell reaction. Enhances Wnt signaling and inhibits TGF-beta signaling. Directly antagonizes activity of BMP2, BMP4, BMP6 and BMP7 in a dose-dependent manner. In Mus musculus (Mouse), this protein is Sclerostin domain-containing protein 1 (Sostdc1).